The chain runs to 287 residues: 4-diphosphocytidyl-2-C-methyl-D-erythritol kinase (287 aa).

Lys-14 is an active-site residue. 96–106 (PWGAGLGGGSS) provides a ligand contact to ATP. Residue Asp-138 is part of the active site.

The protein belongs to the GHMP kinase family. IspE subfamily.

The enzyme catalyses 4-CDP-2-C-methyl-D-erythritol + ATP = 4-CDP-2-C-methyl-D-erythritol 2-phosphate + ADP + H(+). Its pathway is isoprenoid biosynthesis; isopentenyl diphosphate biosynthesis via DXP pathway; isopentenyl diphosphate from 1-deoxy-D-xylulose 5-phosphate: step 3/6. Catalyzes the phosphorylation of the position 2 hydroxy group of 4-diphosphocytidyl-2C-methyl-D-erythritol. The sequence is that of 4-diphosphocytidyl-2-C-methyl-D-erythritol kinase from Methylibium petroleiphilum (strain ATCC BAA-1232 / LMG 22953 / PM1).